Here is a 292-residue protein sequence, read N- to C-terminus: MNFQSVIATLNQFWADRGCLIAQPYDTEKGAGTMNPHTFLRAIGPEPWAVAYVEPCRRPTDGRYGENPNRYQHYYQYQVLIKPSPEGIQETYLDSLRALGIQPEEHDIRFVEDNWESPTLGAWGVGWEVWLDGMEVAQFTYFQQCGGIDCRPVSIEITYGLERLAMYLQNVEAFTEIKWTDRLSYGDVHLQSEIEQCTYNFEASTPELLFQLFGLYEQEATQLIEKGLVHPSLDYVLKCSHSFNLLDARGLISVTERTRYIGRIRNMARQVAKLYLEQREQLGFPLLQKVTA.

This sequence belongs to the class-II aminoacyl-tRNA synthetase family. In terms of assembly, tetramer of two alpha and two beta subunits.

It is found in the cytoplasm. The catalysed reaction is tRNA(Gly) + glycine + ATP = glycyl-tRNA(Gly) + AMP + diphosphate. This is Glycine--tRNA ligase alpha subunit from Synechococcus sp. (strain ATCC 27144 / PCC 6301 / SAUG 1402/1) (Anacystis nidulans).